Here is a 264-residue protein sequence, read N- to C-terminus: Energy-coupling factor transporter ATP-binding protein EcfA1 (264 aa).

Positions 2 to 234 (IQVENLSFSY…DEFNPFLIKI (233 aa)) constitute an ABC transporter domain. 34 to 41 (GKNGSGKS) is an ATP binding site.

It belongs to the ABC transporter superfamily. Energy-coupling factor EcfA family. In terms of assembly, forms a stable energy-coupling factor (ECF) transporter complex composed of 2 membrane-embedded substrate-binding proteins (S component), 2 ATP-binding proteins (A component) and 2 transmembrane proteins (T component).

The protein localises to the cell inner membrane. ATP-binding (A) component of a common energy-coupling factor (ECF) ABC-transporter complex. Unlike classic ABC transporters this ECF transporter provides the energy necessary to transport a number of different substrates. The polypeptide is Energy-coupling factor transporter ATP-binding protein EcfA1 (Fusobacterium nucleatum subsp. nucleatum (strain ATCC 25586 / DSM 15643 / BCRC 10681 / CIP 101130 / JCM 8532 / KCTC 2640 / LMG 13131 / VPI 4355)).